Here is a 490-residue protein sequence, read N- to C-terminus: Betaine aldehyde dehydrogenase (490 aa).

T26, I27, and D93 together coordinate K(+). NAD(+) is bound at residue 150–152 (GAW). K162 serves as the catalytic Charge relay system. NAD(+) is bound at residue 176 to 179 (KPSE). V180 is a binding site for K(+). NAD(+) is bound at residue 230 to 233 (GTST). L246 provides a ligand contact to K(+). Residue E252 is the Proton acceptor of the active site. The NAD(+) site is built by G254, C286, and E387. Catalysis depends on C286, which acts as the Nucleophile. At C286 the chain carries Cysteine sulfenic acid (-SOH). K(+)-binding residues include K457 and G460. Catalysis depends on E464, which acts as the Charge relay system.

Belongs to the aldehyde dehydrogenase family. In terms of assembly, dimer of dimers. Requires K(+) as cofactor.

It catalyses the reaction betaine aldehyde + NAD(+) + H2O = glycine betaine + NADH + 2 H(+). The protein operates within amine and polyamine biosynthesis; betaine biosynthesis via choline pathway; betaine from betaine aldehyde: step 1/1. Its function is as follows. Involved in the biosynthesis of the osmoprotectant glycine betaine. Catalyzes the irreversible oxidation of betaine aldehyde to the corresponding acid. The sequence is that of Betaine aldehyde dehydrogenase from Pseudomonas paraeruginosa (strain DSM 24068 / PA7) (Pseudomonas aeruginosa (strain PA7)).